The chain runs to 343 residues: Major outer membrane protein (343 aa).

An N-terminal signal peptide occupies residues 1–20 (MKKTIVALAVAAVAATSANA).

Disulfide bond interactions within and between MOMP molecules and other components form high molecular-weight oligomers.

The protein resides in the cell outer membrane. Functionally, structural rigidity of the outer membrane of elementary bodies and porin forming, permitting diffusion of solutes through the intracellular reticulate body membrane. The chain is Major outer membrane protein (ompH) from Pasteurella multocida.